A 72-amino-acid chain; its full sequence is Putative ORF1 protein (72 aa).

The protein is Putative ORF1 protein (ORF1) of Leishmania RNA virus 1 - 1 (isolate Leishmania guyanensis) (LRV-1-1).